The following is a 470-amino-acid chain: Adenosylhomocysteinase (470 aa).

Substrate-binding residues include Thr-61, Asp-136, and Glu-196. 197–199 lines the NAD(+) pocket; sequence TTT. The substrate site is built by Lys-226 and Asp-230. NAD(+) contacts are provided by residues Asn-231, 260 to 265, Glu-283, Asn-318, 339 to 341, and Asn-384; these read GYGDVG and IGH.

Belongs to the adenosylhomocysteinase family. NAD(+) serves as cofactor.

The protein resides in the cytoplasm. It catalyses the reaction S-adenosyl-L-homocysteine + H2O = L-homocysteine + adenosine. It participates in amino-acid biosynthesis; L-homocysteine biosynthesis; L-homocysteine from S-adenosyl-L-homocysteine: step 1/1. In terms of biological role, may play a key role in the regulation of the intracellular concentration of adenosylhomocysteine. The chain is Adenosylhomocysteinase from Aromatoleum aromaticum (strain DSM 19018 / LMG 30748 / EbN1) (Azoarcus sp. (strain EbN1)).